A 797-amino-acid chain; its full sequence is Protocadherin beta-9 (797 aa).

A signal peptide spans 1–26 (MKTRGFSFPRQRQVLFLFLFWGVSLA). The Extracellular segment spans residues 27–690 (GSGFGRYSVT…AQADLLTVYL (664 aa)). 5 Cadherin domains span residues 35-133 (VTEE…SPVF), 138-242 (MVLK…VPQF), 247-347 (YETQ…PPEL), 352-451 (LSNS…APAF), and 456-561 (YTLF…SPFV). A glycan (N-linked (GlcNAc...) asparagine) is linked at N169. Residue N418 is glycosylated (N-linked (GlcNAc...) asparagine). N567 carries N-linked (GlcNAc...) asparagine glycosylation. The Cadherin 6 domain maps to 568-671 (GSAPCTELVP…LVDGFSQPYL (104 aa)). A helical membrane pass occupies residues 691–711 (VVALASVSSLFLLSVLLFVAV). Residues 712–797 (RLCRRSRAAS…TLPNSFGFNY (86 aa)) are Cytoplasmic-facing. The interval 777 to 797 (HRGGKEIEENSTLPNSFGFNY) is disordered. Polar residues predominate over residues 786 to 797 (NSTLPNSFGFNY).

It localises to the cell membrane. Its function is as follows. Potential calcium-dependent cell-adhesion protein. May be involved in the establishment and maintenance of specific neuronal connections in the brain. In Homo sapiens (Human), this protein is Protocadherin beta-9 (PCDHB9).